A 380-amino-acid chain; its full sequence is Crotonobetainyl-CoA reductase (380 aa).

Belongs to the acyl-CoA dehydrogenase family. As to quaternary structure, homotetramer. It depends on FAD as a cofactor.

The protein resides in the cytoplasm. The enzyme catalyses 4-(trimethylamino)butanoyl-CoA + oxidized [electron-transfer flavoprotein] + H(+) = crotonobetainyl-CoA + reduced [electron-transfer flavoprotein]. The protein operates within amine and polyamine metabolism; carnitine metabolism. In terms of biological role, catalyzes the reduction of crotonobetainyl-CoA to gamma-butyrobetainyl-CoA. This chain is Crotonobetainyl-CoA reductase, found in Salmonella arizonae (strain ATCC BAA-731 / CDC346-86 / RSK2980).